A 333-amino-acid chain; its full sequence is MLGWIKRLIRMVFQQVGVSMQSVLWSRKPYGSSRSIVRKIGTNLSLIQCPRVQFQINSHATEWSPSHPGEDAVASFADVGWVAKEEGECSARLRTEVRSRPPLQDDLLFFEKAPSRQISLPDLSQEEPQLKTPALANEEALQKICALENELAALRAQIAKIVTQQEQQNLTAGDLDSTTFGTIPPHPPPPPPPLPPPALGLHQSTSAVDLIKERREKRANAGKTLVKNNPKKPEMPNMLEILKEMNSVKLRSVKRSEQDVKPKPVDATDPAALIAEALKKKFAYRYRSDSQDEVEKGIPKSESEATSERVLFGPHMLKPTGKMKALIENVSDS.

A mitochondrion-targeting transit peptide spans 1–48 (MLGWIKRLIRMVFQQVGVSMQSVLWSRKPYGSSRSIVRKIGTNLSLIQ). At serine 119 the chain carries Phosphoserine. A coiled-coil region spans residues 137–169 (NEEALQKICALENELAALRAQIAKIVTQQEQQN). 2 disordered regions span residues 177–198 (STTF…PPPA) and 288–315 (SDSQ…FGPH). The segment at 179-304 (TFGTIPPHPP…EKGIPKSESE (126 aa)) is necessary and sufficient to promote mitochondrial fission. A compositionally biased stretch (pro residues) spans 184–198 (PPHPPPPPPPLPPPA). Basic and acidic residues predominate over residues 288–307 (SDSQDEVEKGIPKSESEATS).

It belongs to the MTFR1 family.

It localises to the mitochondrion. In terms of biological role, may play a role in mitochondrial aerobic respiration. May also regulate mitochondrial organization and fission. This Homo sapiens (Human) protein is Mitochondrial fission regulator 1 (MTFR1).